The sequence spans 341 residues: Phenylalanine--tRNA ligase alpha subunit (341 aa).

Glutamate 254 lines the Mg(2+) pocket.

Belongs to the class-II aminoacyl-tRNA synthetase family. Phe-tRNA synthetase alpha subunit type 1 subfamily. As to quaternary structure, tetramer of two alpha and two beta subunits. Mg(2+) serves as cofactor.

It is found in the cytoplasm. It carries out the reaction tRNA(Phe) + L-phenylalanine + ATP = L-phenylalanyl-tRNA(Phe) + AMP + diphosphate + H(+). The chain is Phenylalanine--tRNA ligase alpha subunit (pheS) from Mycoplasma genitalium (strain ATCC 33530 / DSM 19775 / NCTC 10195 / G37) (Mycoplasmoides genitalium).